Here is a 344-residue protein sequence, read N- to C-terminus: Dihydroorotase (344 aa).

The Zn(2+) site is built by His-13 and His-15. Substrate-binding positions include 15–17 (HLR) and Asn-41. Positions 98, 135, and 173 each coordinate Zn(2+). Lys-98 carries the N6-carboxylysine modification. Residue His-135 participates in substrate binding. Residue Leu-218 coordinates substrate. Asp-247 lines the Zn(2+) pocket. Asp-247 is an active-site residue. Residues His-251 and Ala-263 each contribute to the substrate site.

Belongs to the metallo-dependent hydrolases superfamily. DHOase family. Class II DHOase subfamily. As to quaternary structure, homodimer. The cofactor is Zn(2+).

The catalysed reaction is (S)-dihydroorotate + H2O = N-carbamoyl-L-aspartate + H(+). It participates in pyrimidine metabolism; UMP biosynthesis via de novo pathway; (S)-dihydroorotate from bicarbonate: step 3/3. Functionally, catalyzes the reversible cyclization of carbamoyl aspartate to dihydroorotate. In Neisseria gonorrhoeae (strain ATCC 700825 / FA 1090), this protein is Dihydroorotase.